We begin with the raw amino-acid sequence, 271 residues long: Formamidopyrimidine-DNA glycosylase (271 aa).

The Schiff-base intermediate with DNA role is filled by Pro-2. Glu-3 (proton donor) is an active-site residue. The active-site Proton donor; for beta-elimination activity is the Lys-57. DNA-binding residues include His-90, Arg-109, and Lys-151. An FPG-type zinc finger spans residues 236–270; the sequence is HVYGRGGETCTECGHLLSEIRLGQRTTVFCSLCQT. Arg-260 serves as the catalytic Proton donor; for delta-elimination activity.

This sequence belongs to the FPG family. As to quaternary structure, monomer. The cofactor is Zn(2+).

It carries out the reaction Hydrolysis of DNA containing ring-opened 7-methylguanine residues, releasing 2,6-diamino-4-hydroxy-5-(N-methyl)formamidopyrimidine.. The enzyme catalyses 2'-deoxyribonucleotide-(2'-deoxyribose 5'-phosphate)-2'-deoxyribonucleotide-DNA = a 3'-end 2'-deoxyribonucleotide-(2,3-dehydro-2,3-deoxyribose 5'-phosphate)-DNA + a 5'-end 5'-phospho-2'-deoxyribonucleoside-DNA + H(+). Involved in base excision repair of DNA damaged by oxidation or by mutagenic agents. Acts as a DNA glycosylase that recognizes and removes damaged bases. Has a preference for oxidized purines, such as 7,8-dihydro-8-oxoguanine (8-oxoG). Has AP (apurinic/apyrimidinic) lyase activity and introduces nicks in the DNA strand. Cleaves the DNA backbone by beta-delta elimination to generate a single-strand break at the site of the removed base with both 3'- and 5'-phosphates. The chain is Formamidopyrimidine-DNA glycosylase from Shewanella amazonensis (strain ATCC BAA-1098 / SB2B).